Here is a 210-residue protein sequence, read N- to C-terminus: Protein-methionine-sulfoxide reductase heme-binding subunit MsrQ (210 aa).

A run of 6 helical transmembrane segments spans residues 8–28 (LAVF…AWIF), 37–57 (VLVE…LAMT), 75–95 (LGLW…LFIL), 110–130 (PYII…VTSN), 147–167 (LVYV…RADL), and 169–189 (EWAL…PMIA).

This sequence belongs to the MsrQ family. In terms of assembly, heterodimer of a catalytic subunit (MsrP) and a heme-binding subunit (MsrQ). FMN is required as a cofactor. The cofactor is heme b.

The protein localises to the cell inner membrane. In terms of biological role, part of the MsrPQ system that repairs oxidized periplasmic proteins containing methionine sulfoxide residues (Met-O), using respiratory chain electrons. Thus protects these proteins from oxidative-stress damage caused by reactive species of oxygen and chlorine generated by the host defense mechanisms. MsrPQ is essential for the maintenance of envelope integrity under bleach stress, rescuing a wide series of structurally unrelated periplasmic proteins from methionine oxidation. MsrQ provides electrons for reduction to the reductase catalytic subunit MsrP, using the quinone pool of the respiratory chain. The polypeptide is Protein-methionine-sulfoxide reductase heme-binding subunit MsrQ (Pseudomonas syringae pv. tomato (strain ATCC BAA-871 / DC3000)).